We begin with the raw amino-acid sequence, 338 residues long: POU domain, class 4, transcription factor 3 (338 aa).

The POU-IV box signature appears at 56–65 (RAEALAAVDI). The POU-specific domain occupies 179 to 256 (DVESDPRELE…VLQAWLEEAE (78 aa)). The homeobox DNA-binding region spans 274–333 (RKRKRTSIAAPEKRSLEAYFAIQPRPSSEKIAAIAEKLDLKKNVVRVWFCNQRQKQKRMK).

Belongs to the POU transcription factor family. Class-4 subfamily. As to quaternary structure, interacts with ISL1. Brain.

The protein resides in the nucleus. Its subcellular location is the cytoplasm. In terms of biological role, acts as a transcriptional activator. Acts by binding to sequences related to the consensus octamer motif 5'-ATGCAAAT-3' in the regulatory regions of its target genes. Involved in the auditory system development, required for terminal differentiation of hair cells in the inner ear. This chain is POU domain, class 4, transcription factor 3, found in Mus musculus (Mouse).